Here is a 330-residue protein sequence, read N- to C-terminus: Beta-ketoacyl-[acyl-carrier-protein] synthase III (330 aa).

Catalysis depends on residues Cys-118 and His-257. An ACP-binding region spans residues 258–262 (QANLR). Residue Asn-287 is part of the active site.

It belongs to the thiolase-like superfamily. FabH family. Homodimer.

It localises to the cytoplasm. It carries out the reaction malonyl-[ACP] + acetyl-CoA + H(+) = 3-oxobutanoyl-[ACP] + CO2 + CoA. It participates in lipid metabolism; fatty acid biosynthesis. Its function is as follows. Catalyzes the condensation reaction of fatty acid synthesis by the addition to an acyl acceptor of two carbons from malonyl-ACP. Catalyzes the first condensation reaction which initiates fatty acid synthesis and may therefore play a role in governing the total rate of fatty acid production. Possesses both acetoacetyl-ACP synthase and acetyl transacylase activities. Its substrate specificity determines the biosynthesis of branched-chain and/or straight-chain of fatty acids. In Nitratidesulfovibrio vulgaris (strain DSM 19637 / Miyazaki F) (Desulfovibrio vulgaris), this protein is Beta-ketoacyl-[acyl-carrier-protein] synthase III.